The primary structure comprises 417 residues: UDP-N-acetylmuramoylalanine--D-glutamate ligase (417 aa).

Residue 104–110 (GSNGKST) coordinates ATP.

Belongs to the MurCDEF family.

The protein resides in the cytoplasm. The catalysed reaction is UDP-N-acetyl-alpha-D-muramoyl-L-alanine + D-glutamate + ATP = UDP-N-acetyl-alpha-D-muramoyl-L-alanyl-D-glutamate + ADP + phosphate + H(+). It functions in the pathway cell wall biogenesis; peptidoglycan biosynthesis. Its function is as follows. Cell wall formation. Catalyzes the addition of glutamate to the nucleotide precursor UDP-N-acetylmuramoyl-L-alanine (UMA). The polypeptide is UDP-N-acetylmuramoylalanine--D-glutamate ligase (Francisella tularensis subsp. novicida (strain U112)).